The sequence spans 313 residues: tRNA dimethylallyltransferase (313 aa).

9–16 (GPTATGKS) contacts ATP. 11 to 16 (TATGKS) is a substrate binding site.

The protein belongs to the IPP transferase family. Monomer. Mg(2+) serves as cofactor.

The catalysed reaction is adenosine(37) in tRNA + dimethylallyl diphosphate = N(6)-dimethylallyladenosine(37) in tRNA + diphosphate. Functionally, catalyzes the transfer of a dimethylallyl group onto the adenine at position 37 in tRNAs that read codons beginning with uridine, leading to the formation of N6-(dimethylallyl)adenosine (i(6)A). The sequence is that of tRNA dimethylallyltransferase from Nocardia farcinica (strain IFM 10152).